Reading from the N-terminus, the 154-residue chain is Nucleoside diphosphate kinase (154 aa).

Lysine 12, phenylalanine 60, arginine 88, threonine 94, arginine 105, and asparagine 115 together coordinate ATP. Histidine 118 acts as the Pros-phosphohistidine intermediate in catalysis.

Belongs to the NDK family. Requires Mg(2+) as cofactor.

The protein resides in the cytoplasm. It catalyses the reaction a 2'-deoxyribonucleoside 5'-diphosphate + ATP = a 2'-deoxyribonucleoside 5'-triphosphate + ADP. The catalysed reaction is a ribonucleoside 5'-diphosphate + ATP = a ribonucleoside 5'-triphosphate + ADP. Functionally, major role in the synthesis of nucleoside triphosphates other than ATP. The ATP gamma phosphate is transferred to the NDP beta phosphate via a ping-pong mechanism, using a phosphorylated active-site intermediate. This is Nucleoside diphosphate kinase from Haloarcula marismortui (strain ATCC 43049 / DSM 3752 / JCM 8966 / VKM B-1809) (Halobacterium marismortui).